An 81-amino-acid chain; its full sequence is UPF0386 protein Smed_0945 (81 aa).

This sequence belongs to the UPF0386 family.

The protein is UPF0386 protein Smed_0945 of Sinorhizobium medicae (strain WSM419) (Ensifer medicae).